Consider the following 225-residue polypeptide: Probable GTP-binding protein EngB (225 aa).

The 174-residue stretch at 31-204 folds into the EngB-type G domain; the sequence is VGVEIAFAGR…LGILDSWCKP (174 aa). GTP is bound by residues 39–46, 65–69, 83–86, 150–153, and 183–185; these read GRSNAGKS, GRTQL, DLPG, TKAD, and FSS. Mg(2+) is bound by residues serine 46 and threonine 67.

This sequence belongs to the TRAFAC class TrmE-Era-EngA-EngB-Septin-like GTPase superfamily. EngB GTPase family. Mg(2+) is required as a cofactor.

In terms of biological role, necessary for normal cell division and for the maintenance of normal septation. This chain is Probable GTP-binding protein EngB, found in Shewanella pealeana (strain ATCC 700345 / ANG-SQ1).